We begin with the raw amino-acid sequence, 387 residues long: 3-ketoacyl-CoA thiolase (387 aa).

Cys91 (acyl-thioester intermediate) is an active-site residue. Active-site proton acceptor residues include His343 and Cys373.

It belongs to the thiolase-like superfamily. Thiolase family. In terms of assembly, heterotetramer of two alpha chains (FadB) and two beta chains (FadA).

The protein localises to the cytoplasm. The catalysed reaction is an acyl-CoA + acetyl-CoA = a 3-oxoacyl-CoA + CoA. It functions in the pathway lipid metabolism; fatty acid beta-oxidation. Its function is as follows. Catalyzes the final step of fatty acid oxidation in which acetyl-CoA is released and the CoA ester of a fatty acid two carbons shorter is formed. This Shewanella sp. (strain W3-18-1) protein is 3-ketoacyl-CoA thiolase.